A 537-amino-acid chain; its full sequence is Asparagine-rich protein (537 aa).

5 disordered regions span residues 1–22 (YNNNNKNNNNNDDGNINYQNTN), 187–254 (NMNI…NNNF), 336–372 (YNNNESNTANPNQMNFEQTNNDNMKRENNNMNNYGYD), 399–479 (LNNN…DDWG), and 509–528 (DLSKKGNDGKNKKKNKMKKD). Composition is skewed to low complexity over residues 336 to 347 (YNNNESNTANPN) and 399 to 469 (LNNN…NQNN). Residues 470 to 479 (NEDEDDDDWG) are compositionally biased toward acidic residues. Residues 509 to 518 (DLSKKGNDGK) are compositionally biased toward basic and acidic residues.

In Plasmodium falciparum, this protein is Asparagine-rich protein.